Here is a 1385-residue protein sequence, read N- to C-terminus: Coiled-coil domain-containing protein 7 (1385 aa).

A coiled-coil region spans residues 299–330; that stretch reads LDAEYKQMQCDFQLLSEEKLVLENELQKLKDK. The segment at 329 to 364 is disordered; the sequence is DKEKTKPTNNRTKKAVKTVKKKDKGKSEDSEKKMSP. Residues 339–352 are compositionally biased toward basic residues; it reads RTKKAVKTVKKKDK. Residues 353–364 show a composition bias toward basic and acidic residues; that stretch reads GKSEDSEKKMSP. Positions 374-411 form a coiled coil; sequence LDQVQKVARLEIENKVLQEQLKQALQEAEKAKHQLNYF. Disordered regions lie at residues 422 to 545, 572 to 752, and 809 to 834; these read GKTE…SKEV, TESK…EPNE, and TKKL…LKHQ. Positions 425-436 are enriched in polar residues; it reads ETTMQVGNSQTK. 2 stretches are compositionally biased toward basic and acidic residues: residues 437–455 and 481–490; these read VKGE…RKSL and LIEKSSEKKR. Composition is skewed to polar residues over residues 493–503, 511–528, and 536–545; these read PAISDLSQILK, LESS…YKSP, and LTTVSSSKEV. A compositionally biased stretch (basic and acidic residues) spans 573 to 589; sequence ESKKADVSEEQLQKMTE. Residues 654–664 show a composition bias toward polar residues; the sequence is RIQSETKNLKA. Composition is skewed to basic and acidic residues over residues 665–676 and 685–697; these read TRNESFHSHNDV and QDTK…EVKK. Positions 701–711 are enriched in polar residues; it reads FQDNQLSTHNE. Basic and acidic residues predominate over residues 712 to 726; that stretch reads VPNERLVVEHQESLS.

Expressed in epithelium of normal cervix and cervical cancer. Overexpressed in early and interim cervical cancer.

Functionally, may play a role in tumorigenesis. The sequence is that of Coiled-coil domain-containing protein 7 (CCDC7) from Homo sapiens (Human).